The chain runs to 277 residues: Undecaprenyl-diphosphatase (277 aa).

7 consecutive transmembrane segments (helical) span residues 3-23, 43-63, 85-105, 109-129, 189-209, 218-238, and 249-269; these read IVLL…EFLP, VGKV…ILVY, LNVL…GKAI, LFTP…ILWA, TDFS…YSLF, ADLP…WLCI, and SFVG…ATAW.

This sequence belongs to the UppP family.

It is found in the cell inner membrane. The catalysed reaction is di-trans,octa-cis-undecaprenyl diphosphate + H2O = di-trans,octa-cis-undecaprenyl phosphate + phosphate + H(+). Functionally, catalyzes the dephosphorylation of undecaprenyl diphosphate (UPP). Confers resistance to bacitracin. The sequence is that of Undecaprenyl-diphosphatase from Albidiferax ferrireducens (strain ATCC BAA-621 / DSM 15236 / T118) (Rhodoferax ferrireducens).